We begin with the raw amino-acid sequence, 134 residues long: Histone H2B (134 aa).

Positions 1–10 are enriched in polar residues; the sequence is MSDKASTPKK. 2 disordered regions span residues 1–29 and 113–134; these read MSDK…EAKK and VSEG…SKSR. Residues 12–29 are compositionally biased toward basic and acidic residues; it reads ATKDATKPKKVGDEEAKK. Residues 125–134 show a composition bias toward polar residues; it reads GQPTSGSKSR.

This sequence belongs to the histone H2B family. As to quaternary structure, the nucleosome is a histone octamer containing two molecules each of H2A, H2B, H3 and H4 assembled in one H3-H4 heterotetramer and two H2A-H2B heterodimers. The octamer wraps approximately 147 bp of DNA.

The protein resides in the nucleus. Its subcellular location is the chromosome. In terms of biological role, core component of nucleosome. Nucleosomes wrap and compact DNA into chromatin, limiting DNA accessibility to the cellular machineries which require DNA as a template. Histones thereby play a central role in transcription regulation, DNA repair, DNA replication and chromosomal stability. DNA accessibility is regulated via a complex set of post-translational modifications of histones, also called histone code, and nucleosome remodeling. This chain is Histone H2B, found in Entamoeba invadens.